Consider the following 412-residue polypeptide: Trehalose synthase (412 aa).

Belongs to the glycosyltransferase group 1 family. Glycosyltransferase 4 subfamily. As to quaternary structure, homodimer. Requires Mg(2+) as cofactor.

It catalyses the reaction an NDP-alpha-D-glucose + D-glucose = alpha,alpha-trehalose + a ribonucleoside 5'-diphosphate + H(+). Synthesizes trehalose from ADP-glucose and glucose. Has a much lower activity toward UDP-glucose and GDP-glucose. The reaction is reversible, the equilibrium strongly favors trehalose synthesis. This chain is Trehalose synthase, found in Pyrococcus furiosus (strain ATCC 43587 / DSM 3638 / JCM 8422 / Vc1).